The chain runs to 352 residues: Phosphoribosylformylglycinamidine cyclo-ligase (352 aa).

Belongs to the AIR synthase family.

The protein resides in the cytoplasm. It catalyses the reaction 2-formamido-N(1)-(5-O-phospho-beta-D-ribosyl)acetamidine + ATP = 5-amino-1-(5-phospho-beta-D-ribosyl)imidazole + ADP + phosphate + H(+). It functions in the pathway purine metabolism; IMP biosynthesis via de novo pathway; 5-amino-1-(5-phospho-D-ribosyl)imidazole from N(2)-formyl-N(1)-(5-phospho-D-ribosyl)glycinamide: step 2/2. The protein is Phosphoribosylformylglycinamidine cyclo-ligase of Pseudomonas putida (strain GB-1).